The sequence spans 779 residues: MAVTRQRVEIPELAHRHVDHQKILSQRSLKSTSPDGMRGLEWFYLVKGASSTPPEEVFMDDTSKCPFSGGKRVPANRDWWPTQLSIEMLHKNSGLSDPMGEEFDYAKEFKTLDLNAVIKDLTALMTDSQEWWPADFGHYGGLMIRMAWHSAGTYRITDGRGGAGAGQQRFAPLNSWPDNANLDKARRLLWPIKQKYGRKISWADLMVLAGNVALESMGFKTFGFAGGRADVWEPEELYWGPEGTWLGDERYSGERQLAEPLGAVQMGLIYVNPEGPNGKPDPIAAAKDIRETFFRMAMNDEETVALIAGGHTFGKTHGAGDPSLVGPEPEAGALEDQGLGWKSKHASGLAGDSITSGLEVTWTTTPTKWSNNFFENLFKYEWELTKSPGGANQWTAKGAEAIIPDAFDKSKKHRPTMLTTDLSLRLDPAYEKISRRFLENPDQFADAFARAWFKLTHRDMGPIQRYLGPLVPKETLIWQDPIPAVNHELVSDQDIAALKTKILASGLSVPELVSTAWASASTFRGSDKRGGANGARIRLSPQKDWEVNQPAQLSKVLGKLEAIQKEFNASAGAKKVSLADLIVLGGTAAVEKAAKDAGVDVKVAFTPGRMDASQEQTDAASFAPLEPRADGFRNYVGKRQQFLQQEEALVDRAQLLKLTGPELTVLVGGLRVLGANANGSKHGVLTAKVGALSNDFFVNLLDMSTQWAPAADGTYEARDRKTNAVKWTGTRADLIFGAHSQLRAYAEVYATSDSKEQFVKDFAKAWTKVMNLDRFDLAA.

A cross-link (tryptophyl-tyrosyl-methioninium (Trp-Tyr) (with M-296)) is located at residues 148 to 270 (WHSAGTYRIT…LGAVQMGLIY (123 aa)). Residue H149 is the Proton acceptor of the active site. The segment at residues 270–296 (YVNPEGPNGKPDPIAAAKDIRETFFRM) is a cross-link (tryptophyl-tyrosyl-methioninium (Tyr-Met) (with W-148)). Heme b is bound at residue H311.

This sequence belongs to the peroxidase family. Peroxidase/catalase subfamily. In terms of assembly, homodimer or homotetramer. Heme b serves as cofactor. Post-translationally, formation of the three residue Trp-Tyr-Met cross-link is important for the catalase, but not the peroxidase activity of the enzyme.

The catalysed reaction is H2O2 + AH2 = A + 2 H2O. It carries out the reaction 2 H2O2 = O2 + 2 H2O. Functionally, bifunctional enzyme with both catalase and broad-spectrum peroxidase activity. This chain is Catalase-peroxidase, found in Bradyrhizobium diazoefficiens (strain JCM 10833 / BCRC 13528 / IAM 13628 / NBRC 14792 / USDA 110).